The sequence spans 367 residues: MAAVVFDAAILSKQEAIPAQFVWPADEAPAADDGVVEEIAIPVVDLAAFLASGGIGRDVAEACERHGFFQVVNHGVDPALLAEAYRCCDAFYARPLAEKQRARRRPGENHGYASSFTGRFDCKLPWKETMSFNCSAAPGNARMVADYFVDALGEEYRHMGEVYQEYCDVMTRLALDVTEVLAVALGLGRGELRGFFADGDPVMRLNHYPPCRQPHLTLGTGPHRDPTSLTLLHQDDVGGLQVLPDDAAAAAGGWRAVRPRADAFVVNIGDTFAALTNGRHASCLHRAVVNGRVARRSLTFFLNPRLDRVVSPPPALVDAAHPRAFPDFTWREFLEFTQRHYRSDTNTMDAFVAWIKQRNGYESLDKY.

Residues 198 to 304 (DGDPVMRLNH…RRSLTFFLNP (107 aa)) form the Fe2OG dioxygenase domain. Y208 is a binding site for 2-oxoglutarate. Residues H223, D225, and H285 each coordinate Fe cation. R295 and S297 together coordinate 2-oxoglutarate.

It belongs to the iron/ascorbate-dependent oxidoreductase family. Fe(2+) is required as a cofactor. The cofactor is L-ascorbate.

The enzyme catalyses gibberellin A12 + 2 2-oxoglutarate + 3 O2 + H(+) = gibberellin A9 + 2 succinate + 3 CO2 + 2 H2O. The catalysed reaction is gibberellin A53 + 2 2-oxoglutarate + 3 O2 + H(+) = gibberellin A20 + 2 succinate + 3 CO2 + 2 H2O. Key oxidase enzyme in the biosynthesis of gibberellin. Catalyzes the formation of bioactive gibberellins (GAs) via a three-step oxidation at C-20 of the GA skeleton. Controls the elongation of the vegetative shoot and plant height by the regulation of active gibberellin levels. In Oryza sativa subsp. japonica (Rice), this protein is Gibberellin 20 oxidase 3.